We begin with the raw amino-acid sequence, 170 residues long: Cathelicidin antimicrobial peptide (170 aa).

An N-terminal signal peptide occupies residues 1–30; it reads MKTQRDGPSLGRWSLVLLLLGLTMPLAVIA. Residues 31–131 constitute a propeptide, cathelin-like domain (CLD); it reads RVLSYQEAVL…DISCDKDKRK (101 aa). Disulfide bonds link cysteine 86–cysteine 97 and cysteine 108–cysteine 125. The interval 150–162 is active core; sequence LKNIGQRIKDFFG.

The protein belongs to the cathelicidin family. In terms of assembly, monomer, homodimer or homotrimer (in vitro). Oligomerizes as tetra- or hexamer in solution (in vitro). Post-translationally, proteolytically cleaved by proteinase PRTN3 into antibacterial peptide LL-37. Proteolytically cleaved by cathepsin CTSG and neutrophil elastase ELANE. In terms of processing, resistant to proteolytic degradation in solution, and when bound to both zwitterionic (mimicking mammalian membranes) and negatively charged membranes (mimicking bacterial membranes). After secretion onto the skin surface, the CAMP gene product is processed by a serine protease-dependent mechanism into multiple novel antimicrobial peptides distinct from and shorter than cathelicidin LL-37. These peptides show enhanced antimicrobial action, acquiring the ability to kill skin pathogens such as S.aureus, E.coli and C.albicans. These peptides have lost the ability to stimulate CXCL8/IL8 release from keratinocytes. The peptides act synergistically, killing bacteria at lower concentrations when present together, and maintain activity at increased salt condition.

It localises to the secreted. Its subcellular location is the vesicle. Functionally, antimicrobial protein that is an integral component of the innate immune system. Binds to bacterial lipopolysaccharides (LPS). Acts via neutrophil N-formyl peptide receptors to enhance the release of CXCL2. Postsecretory processing generates multiple cathelicidin antimicrobial peptides with various lengths which act as a topical antimicrobial defense in sweat on skin. The unprocessed precursor form, cathelicidin antimicrobial peptide, inhibits the growth of Gram-negative E.coli and E.aerogenes with efficiencies comparable to that of the mature peptide LL-37 (in vitro). Its function is as follows. Antimicrobial peptide that is an integral component of the innate immune system. Binds to bacterial lipopolysaccharides (LPS). Causes membrane permeabilization by forming transmembrane pores (in vitro). Causes lysis of E.coli. Exhibits antimicrobial activity against Gram-negative bacteria such as P.aeruginosa, S.typhimurium, E.aerogenes, E.coli and P.syringae, Gram-positive bacteria such as L.monocytogenes, S.epidermidis, S.pyogenes and S.aureus, as well as vancomycin-resistant enterococci (in vitro). Exhibits antimicrobial activity against methicillin-resistant S.aureus, P.mirabilis, and C.albicans in low-salt media, but not in media containing 100 mM NaCl (in vitro). Forms chiral supramolecular assemblies with quinolone signal (PQS) molecules of P.aeruginosa, which may lead to interference of bacterial quorum signaling and perturbance of bacterial biofilm formation. May form supramolecular fiber-like assemblies on bacterial membranes. Induces cytokine and chemokine producation as well as TNF/TNFA and CSF2/GMCSF production in normal human keratinocytes. Exhibits hemolytic activity against red blood cells. In terms of biological role, exhibits antimicrobial activity against E.coli and B.megaterium (in vitro). This chain is Cathelicidin antimicrobial peptide, found in Ateles fusciceps robustus (Colombian black-faced spider monkey).